An 87-amino-acid chain; its full sequence is Kappa 1a-bungarotoxin (87 aa).

Positions 1-21 (MKTLLLTLVVVTIVCLDLGYT) are cleaved as a signal peptide. 5 disulfides stabilise this stretch: C24/C42, C35/C63, C48/C52, C67/C79, and C80/C85.

Belongs to the three-finger toxin family. Long-chain subfamily. Kappa-neurotoxin sub-subfamily. In terms of assembly, homo- and heterodimer; non-covalently linked. Expressed by the venom gland.

It localises to the secreted. Postsynaptic neurotoxin that binds and inhibits neuronal nicotinic acetylcholine receptors (nAChR) with high affinity (IC(50)&lt;100 nM). Is a selective, and slowly reversible antagonist of alpha-3/CHRNA3-containing and some alpha-4/CHRNA4-containing AChRs. The protein is Kappa 1a-bungarotoxin of Bungarus candidus (Malayan krait).